Here is a 280-residue protein sequence, read N- to C-terminus: Bifunctional protein FolD (280 aa).

NADP(+) is bound by residues 166–168 and S191; that span reads GRS.

The protein belongs to the tetrahydrofolate dehydrogenase/cyclohydrolase family. As to quaternary structure, homodimer.

It catalyses the reaction (6R)-5,10-methylene-5,6,7,8-tetrahydrofolate + NADP(+) = (6R)-5,10-methenyltetrahydrofolate + NADPH. The catalysed reaction is (6R)-5,10-methenyltetrahydrofolate + H2O = (6R)-10-formyltetrahydrofolate + H(+). Its pathway is one-carbon metabolism; tetrahydrofolate interconversion. Functionally, catalyzes the oxidation of 5,10-methylenetetrahydrofolate to 5,10-methenyltetrahydrofolate and then the hydrolysis of 5,10-methenyltetrahydrofolate to 10-formyltetrahydrofolate. The sequence is that of Bifunctional protein FolD from Marinomonas sp. (strain MWYL1).